The primary structure comprises 173 residues: Crossover junction endodeoxyribonuclease RuvC (173 aa).

Residues aspartate 8, glutamate 67, and aspartate 139 contribute to the active site. 3 residues coordinate Mg(2+): aspartate 8, glutamate 67, and aspartate 139.

Belongs to the RuvC family. Homodimer which binds Holliday junction (HJ) DNA. The HJ becomes 2-fold symmetrical on binding to RuvC with unstacked arms; it has a different conformation from HJ DNA in complex with RuvA. In the full resolvosome a probable DNA-RuvA(4)-RuvB(12)-RuvC(2) complex forms which resolves the HJ. The cofactor is Mg(2+).

The protein resides in the cytoplasm. The enzyme catalyses Endonucleolytic cleavage at a junction such as a reciprocal single-stranded crossover between two homologous DNA duplexes (Holliday junction).. Its function is as follows. The RuvA-RuvB-RuvC complex processes Holliday junction (HJ) DNA during genetic recombination and DNA repair. Endonuclease that resolves HJ intermediates. Cleaves cruciform DNA by making single-stranded nicks across the HJ at symmetrical positions within the homologous arms, yielding a 5'-phosphate and a 3'-hydroxyl group; requires a central core of homology in the junction. The consensus cleavage sequence is 5'-(A/T)TT(C/G)-3'. Cleavage occurs on the 3'-side of the TT dinucleotide at the point of strand exchange. HJ branch migration catalyzed by RuvA-RuvB allows RuvC to scan DNA until it finds its consensus sequence, where it cleaves and resolves the cruciform DNA. The polypeptide is Crossover junction endodeoxyribonuclease RuvC (Shewanella piezotolerans (strain WP3 / JCM 13877)).